We begin with the raw amino-acid sequence, 503 residues long: Na(+)-translocating NADH-quinone reductase subunit B (503 aa).

A run of 5 helical transmembrane segments spans residues 55-75, 94-114, 120-140, 161-181, and 186-206; these read MMLV…NSGL, ISGF…VPIL, IFIP…VLFA, TLPP…GIVV, and FGGT…FLFF. The residue at position 248 (T248) is an FMN phosphoryl threonine. 5 helical membrane-spanning segments follow: residues 361–381, 386–406, 417–437, 452–472, and 475–495; these read TSTF…IASW, AFGI…VLIV, FFIP…LVFM, WIYG…NPAY, and GVML…YFAV.

Belongs to the NqrB/RnfD family. Composed of six subunits; NqrA, NqrB, NqrC, NqrD, NqrE and NqrF. FMN serves as cofactor.

The protein resides in the cell inner membrane. The catalysed reaction is a ubiquinone + n Na(+)(in) + NADH + H(+) = a ubiquinol + n Na(+)(out) + NAD(+). In terms of biological role, NQR complex catalyzes the reduction of ubiquinone-1 to ubiquinol by two successive reactions, coupled with the transport of Na(+) ions from the cytoplasm to the periplasm. NqrA to NqrE are probably involved in the second step, the conversion of ubisemiquinone to ubiquinol. The chain is Na(+)-translocating NADH-quinone reductase subunit B from Chlamydia pneumoniae (Chlamydophila pneumoniae).